A 432-amino-acid chain; its full sequence is uncharacterized protein (432 aa).

13 helical membrane passes run 7-27 (FIGL…PDIY), 29-49 (GIVI…PLPV), 68-88 (EALT…FMLA), 124-144 (FLSM…IALG), 156-176 (FLLL…IIGS), 196-216 (VGFP…YIYF), 241-261 (LVIF…SEIF), 266-286 (FDSV…LVEV), 291-311 (KIDW…GVIV), 326-346 (ILGN…TIIL), 358-378 (IIVP…LILA), 379-399 (VGMS…NAIV), and 412-432 (IGMI…ILYL).

Belongs to the CitM (TC 2.A.11) transporter family.

It localises to the cell membrane. This is an uncharacterized protein from Methanocaldococcus jannaschii (strain ATCC 43067 / DSM 2661 / JAL-1 / JCM 10045 / NBRC 100440) (Methanococcus jannaschii).